Reading from the N-terminus, the 211-residue chain is uncharacterized protein (211 aa).

The disordered stretch occupies residues 155–211 (AAENASEEGDKKQIITDSGKLPETEELTETTNEDLDIKQFSPYSSESSANVSSYNKS). The span at 178 to 188 (TEELTETTNED) shows a compositional bias: acidic residues. Positions 195–211 (SPYSSESSANVSSYNKS) are enriched in low complexity.

This is an uncharacterized protein from Schizosaccharomyces pombe (strain 972 / ATCC 24843) (Fission yeast).